Here is a 367-residue protein sequence, read N- to C-terminus: Ferrochelatase (367 aa).

Positions 226 and 307 each coordinate Fe cation.

The protein belongs to the ferrochelatase family.

It is found in the cytoplasm. The enzyme catalyses heme b + 2 H(+) = protoporphyrin IX + Fe(2+). The protein operates within porphyrin-containing compound metabolism; protoheme biosynthesis; protoheme from protoporphyrin-IX: step 1/1. In terms of biological role, catalyzes the ferrous insertion into protoporphyrin IX. This is Ferrochelatase from Burkholderia mallei (strain NCTC 10247).